The chain runs to 258 residues: Fibroblast growth factor-binding protein 3 (258 aa).

The first 26 residues, 1-26 (MTPPKLRASLSPSLLLLLSGCLLAAA), serve as a signal peptide directing secretion. 2 disulfide bridges follow: C59-C80 and C90-C124. Positions 146–231 (RLVPRASPPA…GTGPDPDGLD (86 aa)) are disordered. Over residues 186–197 (GTPPPQSAPPKE) the composition is skewed to pro residues. A compositionally biased stretch (basic and acidic residues) spans 198–209 (NPSERKTNEGKR). A disulfide bridge connects residues C241 and C249.

Belongs to the fibroblast growth factor-binding protein family. Interacts with FGF2.

It localises to the secreted. Its function is as follows. Heparin-binding protein which binds to FGF2, prevents binding of FGF2 to heparin and probably inhibits immobilization of FGF2 on extracellular matrix glycosaminoglycans, allowing its release and subsequent activation of FGFR signaling which leads to increased vascular permeability. The sequence is that of Fibroblast growth factor-binding protein 3 (FGFBP3) from Homo sapiens (Human).